We begin with the raw amino-acid sequence, 251 residues long: Ubiquinone/menaquinone biosynthesis C-methyltransferase UbiE (251 aa).

Residues Thr74, Asp95, Asn123–Ala124, and Ser140 each bind S-adenosyl-L-methionine.

Belongs to the class I-like SAM-binding methyltransferase superfamily. MenG/UbiE family.

It catalyses the reaction a 2-demethylmenaquinol + S-adenosyl-L-methionine = a menaquinol + S-adenosyl-L-homocysteine + H(+). It carries out the reaction a 2-methoxy-6-(all-trans-polyprenyl)benzene-1,4-diol + S-adenosyl-L-methionine = a 5-methoxy-2-methyl-3-(all-trans-polyprenyl)benzene-1,4-diol + S-adenosyl-L-homocysteine + H(+). It participates in quinol/quinone metabolism; menaquinone biosynthesis; menaquinol from 1,4-dihydroxy-2-naphthoate: step 2/2. It functions in the pathway cofactor biosynthesis; ubiquinone biosynthesis. Functionally, methyltransferase required for the conversion of demethylmenaquinol (DMKH2) to menaquinol (MKH2) and the conversion of 2-polyprenyl-6-methoxy-1,4-benzoquinol (DDMQH2) to 2-polyprenyl-3-methyl-6-methoxy-1,4-benzoquinol (DMQH2). The protein is Ubiquinone/menaquinone biosynthesis C-methyltransferase UbiE of Salmonella arizonae (strain ATCC BAA-731 / CDC346-86 / RSK2980).